A 116-amino-acid polypeptide reads, in one-letter code: UPF0298 protein EF_2453 (116 aa).

This sequence belongs to the UPF0298 family.

The protein localises to the cytoplasm. This Enterococcus faecalis (strain ATCC 700802 / V583) protein is UPF0298 protein EF_2453.